A 452-amino-acid polypeptide reads, in one-letter code: Cell division protein FtsZ (452 aa).

GTP-binding positions include 24 to 28 (GAGSN), 111 to 113 (GTG), glutamate 142, arginine 146, and aspartate 190.

Belongs to the FtsZ family. Homodimer. Polymerizes to form a dynamic ring structure in a strictly GTP-dependent manner. Interacts directly with several other division proteins.

Its subcellular location is the cytoplasm. Functionally, essential cell division protein that forms a contractile ring structure (Z ring) at the future cell division site. The regulation of the ring assembly controls the timing and the location of cell division. One of the functions of the FtsZ ring is to recruit other cell division proteins to the septum to produce a new cell wall between the dividing cells. Binds GTP and shows GTPase activity. This is Cell division protein FtsZ from Rickettsia felis (strain ATCC VR-1525 / URRWXCal2) (Rickettsia azadi).